The primary structure comprises 554 residues: Acetyl-S-ACP:malonate ACP transferase (554 aa).

The protein resides in the cytoplasm. The catalysed reaction is acetyl-[ACP] + malonate = malonyl-[ACP] + acetate. In terms of biological role, alpha subunit of the biotin-independent and biotin-dependent malonate decarboxylase multienzyme complex (EC 4.1.1.88 and EC 7.2.4.4, respectively). Acts as an acyl-carrier protein (ACP) transferase component. This first step in malonate decarboxylation involves the exchange of an acetyl thioester residue bound to the activated ACP subunit for a malonyl thioester residue. Has a weak activity with acetyl-CoA as substrate. The chain is Acetyl-S-ACP:malonate ACP transferase (madA) from Malonomonas rubra.